The chain runs to 144 residues: 3-dehydroquinate dehydratase (144 aa).

The active-site Proton acceptor is the tyrosine 24. Asparagine 76, histidine 82, and aspartate 89 together coordinate substrate. Catalysis depends on histidine 102, which acts as the Proton donor. Residues 103–104 (LS) and arginine 113 each bind substrate.

Belongs to the type-II 3-dehydroquinase family. Homododecamer.

It catalyses the reaction 3-dehydroquinate = 3-dehydroshikimate + H2O. It functions in the pathway metabolic intermediate biosynthesis; chorismate biosynthesis; chorismate from D-erythrose 4-phosphate and phosphoenolpyruvate: step 3/7. Functionally, catalyzes a trans-dehydration via an enolate intermediate. The chain is 3-dehydroquinate dehydratase from Bordetella bronchiseptica (strain ATCC BAA-588 / NCTC 13252 / RB50) (Alcaligenes bronchisepticus).